The following is a 203-amino-acid chain: MISRADPLTARQAEILDFIRHTVESEGRPPTRAEICTAFGFRSPNAAETHLRTLAAKGAIVLEEGRARGIRLVEALGLPLVGHVAAGRPMLAVEHIEARYQIDSALFSPRADYLLRVRGMSMRDAGIIDSDLLAVHRTPQVRAGQVVVARLEDEVTVKTFTREGPIVRLLPANPDFEPIVVDTRHQALDIEGIAVGLVRNGSR.

Residues 32–52 (RAEICTAFGFRSPNAAETHLR) constitute a DNA-binding region (H-T-H motif). Active-site for autocatalytic cleavage activity residues include Ser-121 and Lys-158.

It belongs to the peptidase S24 family. As to quaternary structure, homodimer.

The enzyme catalyses Hydrolysis of Ala-|-Gly bond in repressor LexA.. Functionally, represses a number of genes involved in the response to DNA damage (SOS response), including recA and lexA. In the presence of single-stranded DNA, RecA interacts with LexA causing an autocatalytic cleavage which disrupts the DNA-binding part of LexA, leading to derepression of the SOS regulon and eventually DNA repair. The sequence is that of LexA repressor from Aromatoleum aromaticum (strain DSM 19018 / LMG 30748 / EbN1) (Azoarcus sp. (strain EbN1)).